A 375-amino-acid polypeptide reads, in one-letter code: All-trans-retinol dehydrogenase [NAD(+)] ADH1B (375 aa).

N-acetylserine is present on Ser-2. At Ser-23 the chain carries Phosphoserine. Tyr-35 carries the post-translational modification Phosphotyrosine. Residues Cys-47, His-68, Cys-98, Cys-101, Cys-104, Cys-112, and Cys-175 each contribute to the Zn(2+) site. Residues 200 to 205 (GLGGVG), Asp-224, Lys-229, 293 to 295 (VGV), and Arg-370 contribute to the NAD(+) site.

The protein belongs to the zinc-containing alcohol dehydrogenase family. Homodimer or heterodimer of closely related subunits. Zn(2+) serves as cofactor. In terms of tissue distribution, expressed in liver.

Its subcellular location is the cytoplasm. It carries out the reaction all-trans-retinol + NAD(+) = all-trans-retinal + NADH + H(+). The catalysed reaction is all-trans-4-hydroxyretinol + NAD(+) = all-trans-4-hydroxyretinal + NADH + H(+). It catalyses the reaction all-trans-4-oxoretinol + NAD(+) = all-trans-4-oxoretinal + NADH + H(+). Catalyzes the NAD-dependent oxidation of all-trans-retinol and its derivatives such as all-trans-4-hydroxyretinol and may participate in retinoid metabolism. In vitro can also catalyze the NADH-dependent reduction of all-trans-retinal and its derivatives such as all-trans-4-oxoretinal. Catalyzes in the oxidative direction with higher efficiency. Has the same affinity for all-trans-4-hydroxyretinol and all-trans-4-oxoretinal. In Papio hamadryas (Hamadryas baboon), this protein is All-trans-retinol dehydrogenase [NAD(+)] ADH1B.